The following is a 582-amino-acid chain: 2-succinyl-5-enolpyruvyl-6-hydroxy-3-cyclohexene-1-carboxylate synthase (582 aa).

This sequence belongs to the TPP enzyme family. MenD subfamily. As to quaternary structure, homodimer. Mg(2+) is required as a cofactor. Requires Mn(2+) as cofactor. The cofactor is thiamine diphosphate.

It carries out the reaction isochorismate + 2-oxoglutarate + H(+) = 5-enolpyruvoyl-6-hydroxy-2-succinyl-cyclohex-3-ene-1-carboxylate + CO2. It participates in quinol/quinone metabolism; 1,4-dihydroxy-2-naphthoate biosynthesis; 1,4-dihydroxy-2-naphthoate from chorismate: step 2/7. Its pathway is cofactor biosynthesis; phylloquinone biosynthesis. Its function is as follows. Catalyzes the thiamine diphosphate-dependent decarboxylation of 2-oxoglutarate and the subsequent addition of the resulting succinic semialdehyde-thiamine pyrophosphate anion to isochorismate to yield 2-succinyl-5-enolpyruvyl-6-hydroxy-3-cyclohexene-1-carboxylate (SEPHCHC). This Prochlorococcus marinus (strain MIT 9303) protein is 2-succinyl-5-enolpyruvyl-6-hydroxy-3-cyclohexene-1-carboxylate synthase.